A 165-amino-acid chain; its full sequence is Peptide methionine sulfoxide reductase MsrA (165 aa).

Cys10 is an active-site residue.

It belongs to the MsrA Met sulfoxide reductase family.

It carries out the reaction L-methionyl-[protein] + [thioredoxin]-disulfide + H2O = L-methionyl-(S)-S-oxide-[protein] + [thioredoxin]-dithiol. It catalyses the reaction [thioredoxin]-disulfide + L-methionine + H2O = L-methionine (S)-S-oxide + [thioredoxin]-dithiol. Functionally, has an important function as a repair enzyme for proteins that have been inactivated by oxidation. Catalyzes the reversible oxidation-reduction of methionine sulfoxide in proteins to methionine. This Campylobacter jejuni subsp. jejuni serotype O:6 (strain 81116 / NCTC 11828) protein is Peptide methionine sulfoxide reductase MsrA.